Reading from the N-terminus, the 374-residue chain is 4-galactosyl-N-acetylglucosaminide 3-alpha-L-fucosyltransferase FUT5 (374 aa).

The Cytoplasmic segment spans residues Met1–Arg15. Residues Cys16–Leu34 traverse the membrane as a helical; Signal-anchor for type II membrane protein segment. At Arg35–Thr374 the chain is on the lumenal side. Asn60, Asn105, Asn167, and Asn198 each carry an N-linked (GlcNAc...) asparagine glycan.

Belongs to the glycosyltransferase 10 family. In terms of tissue distribution, liver, colon and testis and trace amounts in T-cells and brain.

It is found in the golgi apparatus. Its subcellular location is the golgi stack membrane. It catalyses the reaction a beta-D-galactosyl-(1-&gt;3)-N-acetyl-beta-D-glucosaminyl derivative + GDP-beta-L-fucose = a beta-D-galactosyl-(1-&gt;3)-[alpha-L-fucosyl-(1-&gt;4)]-N-acetyl-beta-D-glucosaminyl derivative + GDP + H(+). The enzyme catalyses an N-acetyl-alpha-neuraminyl-(2-&gt;3)-beta-D-galactosyl-(1-&gt;4)-N-acetyl-beta-D-glucosaminyl derivative + GDP-beta-L-fucose = an alpha-Neu5Ac-(2-&gt;3)-beta-D-Gal-(1-&gt;4)-[alpha-L-Fuc-(1-&gt;3)]-beta-D-GlcNAc derivative + GDP + H(+). It carries out the reaction an alpha-Neu5Ac-(2-&gt;3)-beta-D-Gal-(1-&gt;4)-beta-D-GlcNAc-(1-&gt;3)-beta-D-Gal-(1-&gt;4)-[alpha-L-Fuc-(1-&gt;3)]-beta-D-GlcNAc derivative + GDP-beta-L-fucose = an alpha-Neu5Ac-(2-&gt;3)-beta-D-Gal-(1-&gt;4)-[alpha-L-Fuc-(1-&gt;3)]-beta-D-GlcNAc-(1-&gt;3)-beta-D-Gal-(1-&gt;4)-[alpha-L-Fuc-(1-&gt;3)]-beta-D-GlcNAc derivative + GDP + H(+). The catalysed reaction is a beta-D-galactosyl-(1-&gt;4)-N-acetyl-beta-D-glucosaminyl derivative + GDP-beta-L-fucose = a beta-D-galactosyl-(1-&gt;4)-[alpha-L-fucosyl-(1-&gt;3)]-N-acetyl-beta-D-glucosaminyl derivative + GDP + H(+). It catalyses the reaction a neolactoside nLc4Cer + GDP-beta-L-fucose = a neolactoside III(3)-alpha-Fuc-nLc4Cer + GDP + H(+). The enzyme catalyses a neolactoside nLc6Cer + GDP-beta-L-fucose = beta-D-galactosyl-(1-&gt;4)-N-acetyl-beta-D-glucosaminyl-(1-&gt;3)-beta-D-galactosyl-(1-&gt;4)-[alpha-L-fucosyl-(1-&gt;3)]-N-acetyl-beta-D-glucosaminyl-(1-&gt;3)-beta-D-galactosyl-(1-&gt;4)-beta-D-glucosyl-(1&lt;-&gt;1')-ceramide + GDP + H(+). It carries out the reaction a neolactoside nLc6Cer(d18:1(4E)) + GDP-beta-L-fucose = a neolactoside III(3)-alpha-Fuc-nLc6Cer(d18:1(4E)) + GDP + H(+). The catalysed reaction is a neolactoside nLc4Cer(d18:1(4E)) + GDP-beta-L-fucose = a neolactoside III(3)-alpha-Fuc-nLc4Cer(d18:1(4E)) + GDP + H(+). It catalyses the reaction a neolactoside VI(3)-alpha-NeuNAc-nLc6Cer + GDP-beta-L-fucose = a neolactoside VI(3)-alpha-NeuAc,III(3)-alphaFuc-nLc6Cer + GDP + H(+). The enzyme catalyses beta-D-galactosyl-(1-&gt;4)-N-acetyl-D-glucosamine + GDP-beta-L-fucose = beta-D-galactosyl-(1-&gt;4)-[alpha-L-fucosyl-(1-&gt;3)]-N-acetyl-D-glucosamine + GDP + H(+). It carries out the reaction N-acetyl-alpha-neuraminosyl-(2-&gt;3)-beta-D-galactosyl-(1-&gt;4)-N-acetyl-beta-D-glucosamine + GDP-beta-L-fucose = N-acetyl-alpha-neuraminosyl-(2-&gt;3)-beta-D-galactosyl-(1-&gt;4)-[alpha-L-fucosyl-(1-&gt;3)]-N-acetyl-beta-D-glucosamine + GDP + H(+). The catalysed reaction is alpha-L-Fuc-(1-&gt;2)-beta-D-Gal-(1-&gt;4)-D-GlcNAc + GDP-beta-L-fucose = alpha-L-Fuc-(1-&gt;2)-beta-D-Gal-(1-&gt;4)-[alpha-L-Fuc-(1-&gt;3)]-D-GlcNAc + GDP + H(+). It catalyses the reaction an alpha-Neu5Ac-(2-&gt;3)-beta-D-Gal-(1-&gt;3)-D-GlcNAc derivative + GDP-beta-L-fucose = an alpha-Neu5Ac-(2-&gt;3)-beta-D-Gal-(1-&gt;3)-[alpha-L-Fuc-(1-&gt;4)]-beta-D-GlcNAc derivative + GDP + H(+). Its pathway is protein modification; protein glycosylation. Its function is as follows. Catalyzes preferentially the transfer of L-fucose, from a guanosine diphosphate-beta-L-fucose, to the N-acetyl-beta-D-glucosamine (GlcNAc) of an N-acetyllactosamine unit (type 2 chain) of an oligosaccharide, or a glycoprotein- and a glycolipid-linked N-acetyllactosamine unit via an alpha (1,3) linkage and participates in the surface expression of VIM-2, Lewis X/SSEA-1 and sialyl Lewis X antigens. Preferentially transfers fucose to the GlcNAc of an internal N-acetyllactosamine unit of a poly-N-acetyllactosamine chain acceptor substrate. Also catalyzes to a lesser extend the transfer of L-fucose to the GlcNAc of a type 1 (beta-D-galactosyl-(1-&gt;3)-N-acetyl-beta-D-glucosaminyl) or H-type 1 (alpha-L-Fuc-(1-&gt;2)-beta-D-Gal-(1-&gt;3)-D-GlcNAc) chain oligosaccharide via an alpha (1,4) linkage. Preferentially catalyzes sialylated type 2 oligosaccharide acceptors over neutral type 2 or H type 2 (alpha-L-Fuc-(1-&gt;2)-beta-D-Gal-(1-&gt;4)-D-GlcNAc) oligosaccharide acceptors. Lactose-based structures are also acceptor substrates. The sequence is that of 4-galactosyl-N-acetylglucosaminide 3-alpha-L-fucosyltransferase FUT5 from Homo sapiens (Human).